We begin with the raw amino-acid sequence, 367 residues long: Glutamate 5-kinase (367 aa).

An ATP-binding site is contributed by Lys9. Residues Ser49, Asp136, and Asn148 each contribute to the substrate site. Residues 168–169 and 210–216 contribute to the ATP site; these read TD and TGGMKSK. Positions 276 to 350 constitute a PUA domain; it reads SGQIEVDAGA…GMQSQDIQAR (75 aa).

Belongs to the glutamate 5-kinase family.

Its subcellular location is the cytoplasm. It carries out the reaction L-glutamate + ATP = L-glutamyl 5-phosphate + ADP. It functions in the pathway amino-acid biosynthesis; L-proline biosynthesis; L-glutamate 5-semialdehyde from L-glutamate: step 1/2. Functionally, catalyzes the transfer of a phosphate group to glutamate to form L-glutamate 5-phosphate. In Bacillus mycoides (strain KBAB4) (Bacillus weihenstephanensis), this protein is Glutamate 5-kinase.